Consider the following 867-residue polypeptide: Protein translocase subunit SecA (867 aa).

ATP contacts are provided by residues Q86, 104-108 (GEGKT), and D499. Residues C848, C850, C859, and H860 each contribute to the Zn(2+) site.

The protein belongs to the SecA family. As to quaternary structure, monomer and homodimer. Part of the essential Sec protein translocation apparatus which comprises SecA, SecYEG and auxiliary proteins SecDF-YajC and YidC. It depends on Zn(2+) as a cofactor.

The protein resides in the cell membrane. The protein localises to the cytoplasm. The enzyme catalyses ATP + H2O + cellular proteinSide 1 = ADP + phosphate + cellular proteinSide 2.. In terms of biological role, part of the Sec protein translocase complex. Interacts with the SecYEG preprotein conducting channel. Has a central role in coupling the hydrolysis of ATP to the transfer of proteins into and across the cell membrane, serving both as a receptor for the preprotein-SecB complex and as an ATP-driven molecular motor driving the stepwise translocation of polypeptide chains across the membrane. The protein is Protein translocase subunit SecA of Wolbachia sp. subsp. Brugia malayi (strain TRS).